The sequence spans 875 residues: MSGSLSRGNGGKKVLNKNQLLKRNRIRNARSIRAEAVAASSTKTGTPSDLSESGSKLNVDQFISSRQFEVKQLQLAMHNSKAASSTRIFQALPRKLRRRTASHNVRRIPKRMRNRALREMRKSDQQDVLKGSSASSRKAHGLNAKQLYKARMSIKLLRLASKSTSMKLSMPPEVTSSNCHVRQKIKTLKRMIKESSTANPNIKLLNNRMGSYDCTGVNELAPIPKGRVKYTKRQKHFAWLPTHIWNAKRSHMMKRWGYQMVWAPTQKCFKLTHRLGGDTCSSDGALCMDSSYIGTIIVKDKSNDSEGDFLKSIIGKLTAERANLRKYREGQVLFQGLIYSFNEENGEDSTKPLGPCDVFWVQKDTAIIRLHPSIYTQVFNILLQHKEKLTVQDCRYSLASVTLKGAKALESLASCLRSTEYSKSFEQFKMVSMITDHNALPQRCTFAFEAIDPRHLAAPKKLNDSQRKTVNSDDILSLHENYPQDEINAVFNELCDPESRTQSYNNQNTLKEISARRYKLLTATPNSINKTTVPFKESDDPSIPLVIIRRLKTRDWIVVLPWFWLLPLWHLLNRIPRMYHIGLRQFQQIQYENKQLYFPDDYPFTQLGYIENSFYKKEASKTKWDRKPMGKRINFEKIKDIHNTKLPAYSGEIGDFFSSDWRFLQILRNGIDYLQRNDKTLELMDSKKTGQFNAQGVRDINCVNDVLEFCKDYEAKTKAMSLSIEENIPVALCKNRKCQFRTPDSISVNSSSFSLTFFPRCIIAVSCTLLERGHPKDNARIYQVPEKDLEHWLQLAKGVYRPNGRKDHDLKIPLPEVHDLIGFITSGTYHLNCGNGMGIGFIDHHAAIRQPTRYVLIRNVGTNTYRLGEWSKISV.

3 disordered regions span residues 1-20 (MSGS…KNQL), 35-54 (EAVA…SESG), and 119-140 (EMRK…RKAH). The span at 39–54 (ASSTKTGTPSDLSESG) shows a compositional bias: polar residues. Thr-524 bears the Phosphothreonine mark.

Component of nuclear RNase P and RNase MRP complexes. RNase P consists of an RNA moiety and at least 9 protein subunits including POP1, POP3, POP4, POP5, POP6, POP7, POP8, RPP1 and RPR2. RNase MRP complex consists of an RNA moiety and at least 10 protein subunits including POP1, POP3, POP4, POP5, POP6, POP7, POP8, RMP1, RPP1 and SNM1, many of which are shared with the RNase P complex.

It localises to the cytoplasm. Its subcellular location is the nucleus. The enzyme catalyses Endonucleolytic cleavage of RNA, removing 5'-extranucleotides from tRNA precursor.. In terms of biological role, required for processing of 5.8S rRNA (short form) at site A3 and for 5' and 3' processing of pre-tRNA. The polypeptide is Ribonucleases P/MRP protein subunit POP1 (POP1) (Saccharomyces cerevisiae (strain ATCC 204508 / S288c) (Baker's yeast)).